Consider the following 349-residue polypeptide: MYGLLKSALFGLPPETTHEITTSALRVAQRVGAHRAYAKQFTVTDPRLSVDAFGQTFPNPVGMAAGFDKNAEIPRALAGLGFGHIEVGAVTAERQPGNDRPRLFRLPDDNALVNRMGFNNEGADTVGARLDAEPLPDVPVGVNIGKSKTTPLADAPDDYTYTFSRVGDAVDYVVVNVSSPNTPGLRELQGRDQLAAILEALQDAGASPLLVKLSPDLHQDAVADAVELANDLGLDGIVATNTTTERPESLSHPHAGEQGGLSGAPIRERATEQVRFVAERTDQPVVGVGGVATAEDAYEKIRAGASVVQLYTALVYEGPWVAKRINEGLVSLLERDGFDSVEDAVGADL.

FMN-binding positions include 65 to 69 (AGFDK) and Ala89. Position 69 (Lys69) interacts with substrate. Residue 114-118 (NRMGF) participates in substrate binding. Residues Asn143 and Asn176 each contribute to the FMN site. Asn176 contacts substrate. Ser179 (nucleophile) is an active-site residue. Asn181 is a substrate binding site. The FMN site is built by Lys212 and Thr240. 241 to 242 (NT) contributes to the substrate binding site. The tract at residues 244–265 (TERPESLSHPHAGEQGGLSGAP) is disordered. The segment covering 245–255 (ERPESLSHPHA) has biased composition (basic and acidic residues). FMN-binding positions include Gly263, Gly290, and 311–312 (YT).

This sequence belongs to the dihydroorotate dehydrogenase family. Type 2 subfamily. Monomer. FMN serves as cofactor.

Its subcellular location is the cell membrane. It catalyses the reaction (S)-dihydroorotate + a quinone = orotate + a quinol. Its pathway is pyrimidine metabolism; UMP biosynthesis via de novo pathway; orotate from (S)-dihydroorotate (quinone route): step 1/1. Catalyzes the conversion of dihydroorotate to orotate with quinone as electron acceptor. This is Dihydroorotate dehydrogenase (quinone) from Halobacterium salinarum (strain ATCC 29341 / DSM 671 / R1).